The primary structure comprises 348 residues: GPALPP motifs-containing protein 1 (348 aa).

Disordered stretches follow at residues 1 to 163 (MARD…AKGP) and 177 to 317 (QRMK…DLKV). Position 2 is an N-acetylalanine (alanine 2). The short motif at 7-12 (GPALPP) is the GPALPP motif 1 element. Over residues 14 to 27 (FKERATVEDQERDP) the composition is skewed to basic and acidic residues. Residue serine 28 is modified to Phosphoserine. The short motif at 32 to 37 (GPALPP) is the GPALPP motif 2 element. Low complexity predominate over residues 41 to 59 (SSSSDSSDSNEDSSSLSEE). Acidic residues predominate over residues 60-69 (GNQESEEDDA). The short motif at 93-98 (GPALPP) is the GPALPP motif 3 element. Serine 106 carries the phosphoserine modification. Pro residues predominate over residues 108–117 (PRPIIGPALP). Positions 113 to 118 (GPALPP) match the GPALPP motif 4 motif. A phosphoserine mark is found at serine 138, serine 143, and serine 148. Residues 144–154 (EEAESGEDEDI) show a composition bias toward acidic residues. 4 stretches are compositionally biased toward basic and acidic residues: residues 177–195 (QRMK…KPVT), 235–269 (PADR…KRLA), 277–287 (ESKRSESLMDI), and 295–317 (KAAE…DLKV). Glycyl lysine isopeptide (Lys-Gly) (interchain with G-Cter in SUMO2) cross-links involve residues lysine 279 and lysine 316.

The chain is GPALPP motifs-containing protein 1 (Gpalpp1) from Rattus norvegicus (Rat).